The sequence spans 328 residues: Alanine racemase (328 aa).

Lys-33 (proton acceptor; specific for D-alanine) is an active-site residue. Position 33 is an N6-(pyridoxal phosphate)lysine (Lys-33). Arg-118 is a substrate binding site. Tyr-237 serves as the catalytic Proton acceptor; specific for L-alanine. Met-283 provides a ligand contact to substrate.

This sequence belongs to the alanine racemase family. Pyridoxal 5'-phosphate serves as cofactor.

The enzyme catalyses L-alanine = D-alanine. It participates in amino-acid biosynthesis; D-alanine biosynthesis; D-alanine from L-alanine: step 1/1. Catalyzes the interconversion of L-alanine and D-alanine. May also act on other amino acids. The protein is Alanine racemase (alr) of Campylobacter jejuni subsp. jejuni serotype O:23/36 (strain 81-176).